Here is a 200-residue protein sequence, read N- to C-terminus: uncharacterized protein (200 aa).

This is an uncharacterized protein from Treponema pallidum (strain Nichols).